Here is a 680-residue protein sequence, read N- to C-terminus: Dihydroxyacetone phosphate acyltransferase (680 aa).

A phosphoserine mark is found at S12 and S17. The short motif at 162-167 is the HXXXXD motif element; sequence HRSYID. An N6-acetyllysine modification is found at K643. The Microbody targeting signal signature appears at 678–680; the sequence is AKL.

Belongs to the GPAT/DAPAT family. Part of a heterotrimeric complex composed of GNPAT, AGPS and a modified form of GNPAT.

It is found in the peroxisome membrane. The catalysed reaction is dihydroxyacetone phosphate + an acyl-CoA = a 1-acylglycerone 3-phosphate + CoA. The enzyme catalyses dihydroxyacetone phosphate + hexadecanoyl-CoA = 1-hexadecanoylglycerone 3-phosphate + CoA. It participates in membrane lipid metabolism; glycerophospholipid metabolism. Its function is as follows. Dihydroxyacetonephosphate acyltransferase catalyzing the first step in the biosynthesis of plasmalogens, a subset of phospholipids that differ from other glycerolipids by having an alkyl chain attached through a vinyl ether linkage at the sn-1 position of the glycerol backbone, and which unique physical properties have an impact on various aspects of cell signaling and membrane biology. This is Dihydroxyacetone phosphate acyltransferase from Bos taurus (Bovine).